A 370-amino-acid polypeptide reads, in one-letter code: CCA-adding enzyme (370 aa).

Positions 8 and 11 each coordinate ATP. CTP-binding residues include Gly-8 and Arg-11. 2 residues coordinate Mg(2+): Asp-21 and Asp-23. 3 residues coordinate ATP: Arg-91, Arg-137, and Arg-140. CTP is bound by residues Arg-91, Arg-137, and Arg-140.

Belongs to the tRNA nucleotidyltransferase/poly(A) polymerase family. Bacterial CCA-adding enzyme type 2 subfamily. Requires Mg(2+) as cofactor.

The catalysed reaction is a tRNA precursor + 2 CTP + ATP = a tRNA with a 3' CCA end + 3 diphosphate. The enzyme catalyses a tRNA with a 3' CCA end + 2 CTP + ATP = a tRNA with a 3' CCACCA end + 3 diphosphate. Functionally, catalyzes the addition and repair of the essential 3'-terminal CCA sequence in tRNAs without using a nucleic acid template. Adds these three nucleotides in the order of C, C, and A to the tRNA nucleotide-73, using CTP and ATP as substrates and producing inorganic pyrophosphate. tRNA 3'-terminal CCA addition is required both for tRNA processing and repair. Also involved in tRNA surveillance by mediating tandem CCA addition to generate a CCACCA at the 3' terminus of unstable tRNAs. While stable tRNAs receive only 3'-terminal CCA, unstable tRNAs are marked with CCACCA and rapidly degraded. This Pseudomonas putida (strain W619) protein is CCA-adding enzyme.